A 48-amino-acid chain; its full sequence is Acidic phospholipase A2 (48 aa).

Ca(2+)-binding residues include Tyr-27, Gly-29, and Gly-31. A disulfide bridge connects residues Cys-28 and Cys-44. His-47 is a catalytic residue. A Ca(2+)-binding site is contributed by Asp-48.

Belongs to the phospholipase A2 family. Group II subfamily. D49 sub-subfamily. In terms of assembly, monomer. Ca(2+) serves as cofactor. As to expression, expressed by the venom gland.

It is found in the secreted. The catalysed reaction is a 1,2-diacyl-sn-glycero-3-phosphocholine + H2O = a 1-acyl-sn-glycero-3-phosphocholine + a fatty acid + H(+). Its activity is regulated as follows. Inhibited by EDTA. Inhibited by Ba(2+), Cu(+), Fe(2+) and Zn(2+) ions and, to a lesser extent, by Mn(2+) and Mg(2+) ions. Snake venom phospholipase A2 (PLA2) that shows myotoxicity and induces paw edema in mice. Exhibits indirect hemolytic activity. Inhibits platelet aggregation induced by ADP and collagen. PLA2 catalyzes the calcium-dependent hydrolysis of the 2-acyl groups in 3-sn-phosphoglycerides. This is Acidic phospholipase A2 from Bothrops pauloensis (Neuwied's lancehead).